Consider the following 272-residue polypeptide: Acidic leucine-rich nuclear phosphoprotein 32 family member B (272 aa).

LRR repeat units follow at residues 16–40 (PAAV…LTDE), 43–64 (NLEF…PKLP), 65–84 (KLKK…DRLA), and 89–110 (SLTH…EPLK). An LRRCT domain is found at 123 to 161 (CEVTNRSDYRETVFRLLPQLSYLDGYDREDQEAPDSDVE). Over residues 149–254 (DREDQEAPDS…DEDEDEEEEE (106 aa)) the composition is skewed to acidic residues. A disordered region spans residues 149 to 272 (DREDQEAPDS…RETDDEGEDD (124 aa)). A phosphoserine mark is found at Ser164 and Ser171. Residues 255–265 (SGKGEKRKRET) show a composition bias toward basic and acidic residues. A Nuclear localization signal motif is present at residues 260–263 (KRKR). Thr265 carries the phosphothreonine modification.

This sequence belongs to the ANP32 family. In terms of assembly, interacts with histones H3 and H4. Interacts with KLF5; this interaction induces promoter region-specific histone incorporation and inhibition of histone acetylation by ANP32B. In terms of processing, some glutamate residues are glycylated by TTLL8. This modification occurs exclusively on glutamate residues and results in a glycine chain on the gamma-carboxyl group. Post-translationally, directly cleaved by caspase-3/CASP3. As to expression, predominantly expressed in brain. Expressed in the entire embryonic brain, whereas in the adult brain its expression is restricted to the subventricular zone where there are neural progenitor cells.

The protein resides in the nucleus. Its function is as follows. Multifunctional protein that is involved in the regulation of many processes including cell proliferation, apoptosis, cell cycle progression or transcription. Regulates the proliferation of neuronal stem cells, differentiation of leukemic cells and progression from G1 to S phase of the cell cycle. As negative regulator of caspase-3-dependent apoptosis, may act as an antagonist of ANP32A in regulating tissue homeostasis. Exhibits histone chaperone properties, able to recruit histones to certain promoters, thus regulating the transcription of specific genes. Also plays an essential role in the nucleocytoplasmic transport of specific mRNAs via the uncommon nuclear mRNA export receptor XPO1/CRM1. Participates in the regulation of adequate adaptive immune responses by acting on mRNA expression and cell proliferation. This chain is Acidic leucine-rich nuclear phosphoprotein 32 family member B (Anp32b), found in Rattus norvegicus (Rat).